The primary structure comprises 58 residues: Mitochondrial import receptor subunit TOM7 homolog (58 aa).

Topologically, residues 1 to 16 are cytoplasmic; it reads MKLSPATKSFIGKTVD. Residues 17-35 traverse the membrane as a helical segment; sequence ISTFAIQWGFVPFVVYLGF. The Mitochondrial intermembrane segment spans residues 36 to 58; that stretch reads KKGAEPMPNGQILPLSAMSLLWG.

Belongs to the Tom7 family. Forms part of the preprotein translocase complex of the outer mitochondrial membrane (TOM complex).

Its subcellular location is the mitochondrion outer membrane. The protein is Mitochondrial import receptor subunit TOM7 homolog (tomm-7) of Caenorhabditis elegans.